Here is a 407-residue protein sequence, read N- to C-terminus: Keratin, type I cuticular Ha2 (407 aa).

The segment at 1-55 (MPSVCMPTTYRPASCLSKTYLSSSCQPSNRRPTGCISSSMGTYGLFCEGAFNGNE) is head. The 312-residue stretch at 55-366 (EKETMQVLND…GLLESEDSKL (312 aa)) folds into the IF rod domain. Residues 56–90 (KETMQVLNDRLANYLEKVRQLEKENAELEGKIQDV) form a coil 1A region. The linker 1 stretch occupies residues 91–101 (YQGQVLTMCPD). Residues 102-202 (YQSYFQTIEE…HEEEVGVLRQ (101 aa)) form a coil 1B region. A linker 12 region spans residues 203 to 218 (QLGDRLNIEVDAAPPV). The coil 2 stretch occupies residues 219–362 (DLTRMLEEMR…DTYRGLLESE (144 aa)). Residues 363-407 (DSKLPCNPCSTPSCQPCAPSPGVSRTVCVPHTVCVPCSPCLQTRY) are tail.

This sequence belongs to the intermediate filament family. In terms of tissue distribution, cuticle of the hair shaft.

This is Keratin, type I cuticular Ha2 (Krt32) from Mus musculus (Mouse).